The following is a 91-amino-acid chain: Small ribosomal subunit protein uS19 (91 aa).

Belongs to the universal ribosomal protein uS19 family.

Its function is as follows. Protein S19 forms a complex with S13 that binds strongly to the 16S ribosomal RNA. The polypeptide is Small ribosomal subunit protein uS19 (Trichodesmium erythraeum (strain IMS101)).